A 369-amino-acid polypeptide reads, in one-letter code: MVLDITGVEKQGIILFSESELSKEFLELIWIIVSILTTIVGVTLGVLVIVWLERKISAGIQQRIGPEYAGPLGIIQALADGIKLLLKEDVIPARGDIWLFNVGPAIVVIPVFLSYLVIPFGKHIILADLGIGVFFWIAVSSIAPLGLLMAGYGSNNKYSFLGGLRAAAQSISYEIPLALCVLSISLLSNSLSTVDIVDAQSKYGLLGWNLWRQPIGFLIFFISSLAECERLPFDPPEAEEELVAGYQTEYSGIKFGLFYVGSYLNLLVSSLFVTVLYLGGWDLSIPFLPTSNQLTWILTNGTFDIINAIIGIIITLTKAYLFLFVSIMTRWTLPRVRIDQLLDLGWKFLLPVALGNLLLTASFQILLLD.

The next 8 helical transmembrane spans lie at 29–49 (IWII…VLVI), 97–117 (IWLF…SYLV), 129–149 (LGIG…GLLM), 167–187 (AAQS…ISLL), 205–225 (LLGW…ISSL), 255–275 (FGLF…FVTV), 305–325 (IINA…FLFV), and 348–368 (FLLP…ILLL).

The protein belongs to the complex I subunit 1 family. In terms of assembly, NDH is composed of at least 16 different subunits, 5 of which are encoded in the nucleus.

The protein resides in the plastid. The protein localises to the chloroplast thylakoid membrane. The catalysed reaction is a plastoquinone + NADH + (n+1) H(+)(in) = a plastoquinol + NAD(+) + n H(+)(out). It carries out the reaction a plastoquinone + NADPH + (n+1) H(+)(in) = a plastoquinol + NADP(+) + n H(+)(out). In terms of biological role, NDH shuttles electrons from NAD(P)H:plastoquinone, via FMN and iron-sulfur (Fe-S) centers, to quinones in the photosynthetic chain and possibly in a chloroplast respiratory chain. The immediate electron acceptor for the enzyme in this species is believed to be plastoquinone. Couples the redox reaction to proton translocation, and thus conserves the redox energy in a proton gradient. The protein is NAD(P)H-quinone oxidoreductase subunit 1, chloroplastic of Angiopteris evecta (Mule's foot fern).